We begin with the raw amino-acid sequence, 443 residues long: Adenylyltransferase and sulfurtransferase UBA4 (443 aa).

ATP is bound by residues Gly-81, Asp-102, 109–113 (SNLHR), Lys-126, and 170–171 (DS). Zn(2+) is bound by residues Cys-212 and Cys-215. Cys-229 acts as the Glycyl thioester intermediate; for adenylyltransferase activity in catalysis. 2 residues coordinate Zn(2+): Cys-290 and Cys-293. The Rhodanese domain maps to 342-441 (KERGFVCLDV…YIDEINPSLP (100 aa)). The active-site Cysteine persulfide intermediate; for sulfurtransferase activity is the Cys-400.

In the N-terminal section; belongs to the HesA/MoeB/ThiF family. UBA4 subfamily. Zn(2+) serves as cofactor.

Its subcellular location is the cytoplasm. The protein localises to the cytosol. Its pathway is tRNA modification; 5-methoxycarbonylmethyl-2-thiouridine-tRNA biosynthesis. Functionally, plays a central role in 2-thiolation of mcm(5)S(2)U at tRNA wobble positions of cytosolic tRNA(Lys), tRNA(Glu) and tRNA(Gln). Acts by mediating the C-terminal thiocarboxylation of sulfur carrier URM1. Its N-terminus first activates URM1 as acyl-adenylate (-COAMP), then the persulfide sulfur on the catalytic cysteine is transferred to URM1 to form thiocarboxylation (-COSH) of its C-terminus. The reaction probably involves hydrogen sulfide that is generated from the persulfide intermediate and that acts as a nucleophile towards URM1. Subsequently, a transient disulfide bond is formed. Does not use thiosulfate as sulfur donor; NFS1 probably acting as a sulfur donor for thiocarboxylation reactions. Prior mcm(5) tRNA modification by the elongator complex is required for 2-thiolation. May also be involved in protein urmylation. The sequence is that of Adenylyltransferase and sulfurtransferase UBA4 from Eremothecium gossypii (strain ATCC 10895 / CBS 109.51 / FGSC 9923 / NRRL Y-1056) (Yeast).